We begin with the raw amino-acid sequence, 613 residues long: pH-response transcription factor pacC/RIM101 (613 aa).

The disordered stretch occupies residues 1 to 61 (MSPSAPEQKP…SSTAPSTSSD (61 aa)). The segment covering 11 to 60 (QLQQQQQQQQQGSSSGDSSSGSVNDSKSVTPAPSATSSTSQSSTAPSTSS) has biased composition (low complexity). 3 consecutive C2H2-type zinc fingers follow at residues 64-89 (LICR…CERH), 100-124 (LTCQ…IRVH), and 130-152 (HKCE…VKTH). The segment covering 146–157 (KKHVKTHADDSV) has biased composition (basic and acidic residues). 4 disordered regions span residues 146–186 (KKHV…YDHT), 371–391 (NTPS…GADG), 406–535 (AISS…ATRE), and 565–613 (EFVE…MPGA). Residues 417 to 441 (PPSSSMSYTSGHSPSPSSSAMSPQS) are compositionally biased toward low complexity. 2 stretches are compositionally biased toward polar residues: residues 442–460 (RHGS…SLPA) and 506–517 (SGASTPKASESA). The short motif at 451-454 (YPTL) is the YPX[LI] motif 1 element. The YPX[LI] motif 2 signature appears at 605-608 (YPIL).

The protein belongs to the pacC/RIM101 family. Binds to DNA. In terms of processing, activated by C-terminal proteolytic cleavage by signaling protease (probably palB/RIM13) at neutral to alkaline ambient pH.

It is found in the cytoplasm. The protein localises to the nucleus. Its function is as follows. Transcription factor that mediates regulation of both acid- and alkaline-expressed genes in response to ambient pH. At alkaline ambient pH, activates transcription of alkaline-expressed genes (including PAC1 itself) and represses transcription of acid-expressed genes. The sequence is that of pH-response transcription factor pacC/RIM101 (PAC1) from Gibberella moniliformis (Maize ear and stalk rot fungus).